Here is a 118-residue protein sequence, read N- to C-terminus: Small ribosomal subunit protein uS13 (118 aa).

A disordered region spans residues 91–118 (HRRGLPVRGQRTKTNARTRKGPRKPIKK).

The protein belongs to the universal ribosomal protein uS13 family. In terms of assembly, part of the 30S ribosomal subunit. Forms a loose heterodimer with protein S19. Forms two bridges to the 50S subunit in the 70S ribosome.

Its function is as follows. Located at the top of the head of the 30S subunit, it contacts several helices of the 16S rRNA. In the 70S ribosome it contacts the 23S rRNA (bridge B1a) and protein L5 of the 50S subunit (bridge B1b), connecting the 2 subunits; these bridges are implicated in subunit movement. Contacts the tRNAs in the A and P-sites. The sequence is that of Small ribosomal subunit protein uS13 from Pectobacterium atrosepticum (strain SCRI 1043 / ATCC BAA-672) (Erwinia carotovora subsp. atroseptica).